The following is a 91-amino-acid chain: Small ribosomal subunit protein uS19m (91 aa).

This sequence belongs to the universal ribosomal protein uS19 family. In terms of assembly, component of the mitochondrial small ribosomal subunit (mt-SSU). Mature N.crassa 74S mitochondrial ribosomes consist of a small (37S) and a large (54S) subunit. The 37S small subunit contains a 16S ribosomal RNA (16S mt-rRNA) and 32 different proteins. The 54S large subunit contains a 23S rRNA (23S mt-rRNA) and 42 different proteins.

The protein resides in the mitochondrion. In terms of biological role, component of the mitochondrial ribosome (mitoribosome), a dedicated translation machinery responsible for the synthesis of mitochondrial genome-encoded proteins, including at least some of the essential transmembrane subunits of the mitochondrial respiratory chain. The mitoribosomes are attached to the mitochondrial inner membrane and translation products are cotranslationally integrated into the membrane. The protein is Small ribosomal subunit protein uS19m (rsm19) of Neurospora crassa (strain ATCC 24698 / 74-OR23-1A / CBS 708.71 / DSM 1257 / FGSC 987).